A 1931-amino-acid polypeptide reads, in one-letter code: Chitin synthase 5 (1931 aa).

The region spanning 11–777 (LGVTDLSSLA…LFRFLEDRLR (767 aa)) is the Myosin motor domain. Residue 122-129 (GPTGSGKS) coordinates ATP. N-linked (GlcNAc...) asparagine glycosylation is found at Asn510, Asn538, and Asn676. The segment at 655 to 677 (VDSLLKSFDQTQTWYIFALRPND) is actin-binding. Residues 798-817 (DPFSPHRYQPTSFDSQDHVY) are disordered. Asn842 carries an N-linked (GlcNAc...) asparagine glycan. 2 consecutive transmembrane segments (helical) span residues 912 to 932 (WVWL…SKIA) and 951 to 971 (MIIW…GPVI). 3 N-linked (GlcNAc...) asparagine glycosylation sites follow: Asn1062, Asn1078, and Asn1146. Residues 1220-1240 (ILLALSCVMVAVIGFKFLSAL) form a helical membrane-spanning segment. Residue Asn1583 is glycosylated (N-linked (GlcNAc...) asparagine). The next 3 membrane-spanning stretches (helical) occupy residues 1615–1635 (LSTI…YLIV), 1641–1661 (IPTL…MIFI), and 1668–1688 (MIAW…LLPL). The disordered stretch occupies residues 1826–1847 (AHRPSLDDTSSFHQPYQPAPRP). The DEK-C domain occupies 1875–1930 (AITDSQLERSIRKICANAELDKLTKKGVRKELEREYGVELTERREAINRLVEKVLT).

In the N-terminal section; belongs to the TRAFAC class CC myosin-kinesin ATPase superfamily. Myosin family. The protein in the C-terminal section; belongs to the chitin synthase family. Class V subfamily.

Its subcellular location is the cell membrane. It is found in the cell septum. It localises to the cell tip. The enzyme catalyses [(1-&gt;4)-N-acetyl-beta-D-glucosaminyl](n) + UDP-N-acetyl-alpha-D-glucosamine = [(1-&gt;4)-N-acetyl-beta-D-glucosaminyl](n+1) + UDP + H(+). Functionally, polymerizes chitin, a structural polymer of the cell wall and septum, by transferring the sugar moiety of UDP-GlcNAc to the non-reducing end of the growing chitin polymer. Produces a large proportion of the chitin that is not deacetylated to chitosan. The sequence is that of Chitin synthase 5 from Cryptococcus neoformans var. grubii serotype A (strain H99 / ATCC 208821 / CBS 10515 / FGSC 9487) (Filobasidiella neoformans var. grubii).